We begin with the raw amino-acid sequence, 49 residues long: Large ribosomal subunit protein bL33B (49 aa).

This sequence belongs to the bacterial ribosomal protein bL33 family.

In Latilactobacillus sakei subsp. sakei (strain 23K) (Lactobacillus sakei subsp. sakei), this protein is Large ribosomal subunit protein bL33B.